Reading from the N-terminus, the 305-residue chain is Tyrosine recombinase XerC (305 aa).

In terms of domain architecture, Core-binding (CB) spans 4–95 (TSIQALINKW…AVKNFYRFLE (92 aa)). The Tyr recombinase domain maps to 116 to 298 (LLPKALSEDD…SIKHLEAVYT (183 aa)). Active-site residues include R159, K182, H250, R253, and H276. The O-(3'-phospho-DNA)-tyrosine intermediate role is filled by Y285.

The protein belongs to the 'phage' integrase family. XerC subfamily. As to quaternary structure, forms a cyclic heterotetrameric complex composed of two molecules of XerC and two molecules of XerD.

The protein localises to the cytoplasm. Site-specific tyrosine recombinase, which acts by catalyzing the cutting and rejoining of the recombining DNA molecules. The XerC-XerD complex is essential to convert dimers of the bacterial chromosome into monomers to permit their segregation at cell division. It also contributes to the segregational stability of plasmids. In Rickettsia conorii (strain ATCC VR-613 / Malish 7), this protein is Tyrosine recombinase XerC.